The chain runs to 482 residues: Zinc metalloproteinase/disintegrin (482 aa).

The signal sequence occupies residues methionine 1–serine 20. Residues methionine 21–alanine 189 constitute a propeptide that is removed on maturation. The Peptidase M12B domain maps to arginine 197 to proline 393. Ca(2+) is bound by residues glutamate 200 and aspartate 284. 2 disulfides stabilise this stretch: cysteine 308/cysteine 388 and cysteine 348/cysteine 372. Histidine 333 is a Zn(2+) binding site. Residue glutamate 334 is part of the active site. Zn(2+) is bound by residues histidine 337 and histidine 343. Residues cysteine 388 and asparagine 391 each contribute to the Ca(2+) site. Positions leucine 394–leucine 409 are excised as a propeptide. In terms of domain architecture, Disintegrin spans threonine 401–alanine 482. 6 disulfide bridges follow: cysteine 415-cysteine 430, cysteine 417-cysteine 425, cysteine 424-cysteine 447, cysteine 438-cysteine 444, cysteine 443-cysteine 468, and cysteine 456-cysteine 475. The short motif at arginine 460–aspartate 462 is the Cell attachment site element.

Belongs to the venom metalloproteinase (M12B) family. P-II subfamily. P-IId sub-subfamily. In terms of assembly, homodimer; disulfide-linked (disintegrin). Zn(2+) is required as a cofactor. In terms of tissue distribution, expressed by the venom gland.

The protein localises to the secreted. In terms of biological role, this recombinant protein hydrolyzes fibronectin, but has no effect on type I gelatin and type I to V collagens. Selectively hydrolyzes the Aalpha-chain of fibrinogen (FGA), but has no effect on fibrin. Functionally, inhibits ADP-induced platelet aggregation. Its function is as follows. Recombinant metalloproteinase-disintegrin Mt-d-I (393-408): hydrolyzes type I gelatin, type III and V collagens, but has no effect on type I, II, IV collagens and fibronectin. Selectively hydrolyzes the Aalpha-chain of fibrinogen, but has no effect on fibrin. May induce hemorrhage in vascular tissue. Strongly inhibits ADP-induced platelet aggregation. When concentrated, Mt-d-I undergoes autoproteolytic processing into metalloproteinase and disintegrin. The polypeptide is Zinc metalloproteinase/disintegrin (Gloydius brevicauda (Korean slamosa snake)).